We begin with the raw amino-acid sequence, 29 residues long: MPLEVLGHLSKAFLFLARNNEHSHKKYNQ.

This is an uncharacterized protein from Saccharomyces cerevisiae (strain ATCC 204508 / S288c) (Baker's yeast).